Here is a 976-residue protein sequence, read N- to C-terminus: Probable alanine--tRNA ligase, chloroplastic/mitochondrial (976 aa).

The transit peptide at 1–54 (MPRPGFAHATAPALAHARARISPVARRRVVVMRTRVDGAAKSLVTQLRLALGST) directs the protein to the chloroplast and mitochondrion. The disordered stretch occupies residues 71–95 (LGTATNDQSTGTRANPNAEGKDNSG). Polar residues predominate over residues 73-85 (TATNDQSTGTRAN).

This sequence belongs to the class-II aminoacyl-tRNA synthetase family. As to quaternary structure, monomer. The cofactor is Zn(2+).

Its subcellular location is the plastid. It localises to the chloroplast. The protein localises to the mitochondrion. The catalysed reaction is tRNA(Ala) + L-alanine + ATP = L-alanyl-tRNA(Ala) + AMP + diphosphate. Catalyzes the attachment of alanine to tRNA(Ala) in a two-step reaction: alanine is first activated by ATP to form Ala-AMP and then transferred to the acceptor end of tRNA(Ala). Also edits incorrectly charged tRNA(Ala) via its editing domain. The chain is Probable alanine--tRNA ligase, chloroplastic/mitochondrial from Ostreococcus tauri.